A 136-amino-acid chain; its full sequence is Large ribosomal subunit protein uL16 (136 aa).

This sequence belongs to the universal ribosomal protein uL16 family. Part of the 50S ribosomal subunit.

In terms of biological role, binds 23S rRNA and is also seen to make contacts with the A and possibly P site tRNAs. The sequence is that of Large ribosomal subunit protein uL16 from Rickettsia canadensis (strain McKiel).